Consider the following 152-residue polypeptide: Nucleoside diphosphate kinase B (152 aa).

The segment at 1–66 (MANLERTFIA…DRPFFPGLVK (66 aa)) is interaction with AKAP13. Residues Lys12, Phe60, Arg88, Thr94, Arg105, and Asn115 each contribute to the ATP site. The active-site Pros-phosphohistidine intermediate is His118.

It belongs to the NDK family. As to quaternary structure, hexamer of two different chains: An and B (A6, A5B, A4B2, A3B3, A2B4, AB5, B6). Interacts with CAPN8. Interacts with AKAP13. Interacts with ITGB1BP1 (via C-terminal domain region). Interacts with BCL2L10. It depends on Mg(2+) as a cofactor.

Its subcellular location is the cytoplasm. The protein resides in the cell projection. The protein localises to the lamellipodium. It is found in the ruffle. It localises to the nucleus. It catalyses the reaction a 2'-deoxyribonucleoside 5'-diphosphate + ATP = a 2'-deoxyribonucleoside 5'-triphosphate + ADP. It carries out the reaction a ribonucleoside 5'-diphosphate + ATP = a ribonucleoside 5'-triphosphate + ADP. The enzyme catalyses ATP + protein L-histidine = ADP + protein N-phospho-L-histidine.. Major role in the synthesis of nucleoside triphosphates other than ATP. The ATP gamma phosphate is transferred to the NDP beta phosphate via a ping-pong mechanism, using a phosphorylated active-site intermediate. Negatively regulates Rho activity by interacting with AKAP13/LBC. Acts as a transcriptional activator of the MYC gene; binds DNA non-specifically. Binds to both single-stranded guanine- and cytosine-rich strands within the nuclease hypersensitive element (NHE) III(1) region of the MYC gene promoter. Does not bind to duplex NHE III(1). Has G-quadruplex (G4) DNA-binding activity, which is independent of its nucleotide-binding and kinase activity. Binds both folded and unfolded G4 with similar low nanomolar affinities. Stabilizes folded G4s regardless of whether they are prefolded or not. Exhibits histidine protein kinase activity. The sequence is that of Nucleoside diphosphate kinase B (NME2) from Pongo abelii (Sumatran orangutan).